A 334-amino-acid chain; its full sequence is MKQAVYVASPDSQQIHVWQLDSAGELTLLQTVDVPGQVQPMAISPNQRHLYVGVRPDFGIVSYHIADDGTLTAAGMAPLPGSPTHIDTDRQGRFLFSASYSFNCVSISPIDTHGVVQAPIQQLDDLPAPHSANIDPTNQILLVPCLKEDKVRLFDLSAEGQLTPHAQADITVAAGAGPRHMAFHPNHQVAYCVNELNSSVDVYQISNNGQEYHLVQSLDAMPADFTGTRWAADIHITPNGRYLYISDRTANLLGIFTVSEDGRVISLVGHHLTEAQPRGFNIDHSGNFLIASGQKSDHIEVYRIDQNTGELTTLKRYPVGKGPMWVSIRGAQNS.

It belongs to the cycloisomerase 2 family.

It carries out the reaction 6-phospho-D-glucono-1,5-lactone + H2O = 6-phospho-D-gluconate + H(+). The protein operates within carbohydrate degradation; pentose phosphate pathway; D-ribulose 5-phosphate from D-glucose 6-phosphate (oxidative stage): step 2/3. Its function is as follows. Catalyzes the hydrolysis of 6-phosphogluconolactone to 6-phosphogluconate. In Yersinia pseudotuberculosis serotype O:1b (strain IP 31758), this protein is 6-phosphogluconolactonase.